Reading from the N-terminus, the 185-residue chain is Ribosome-recycling factor (185 aa).

The protein belongs to the RRF family.

It localises to the cytoplasm. Responsible for the release of ribosomes from messenger RNA at the termination of protein biosynthesis. May increase the efficiency of translation by recycling ribosomes from one round of translation to another. This Photobacterium profundum (strain SS9) protein is Ribosome-recycling factor.